A 626-amino-acid polypeptide reads, in one-letter code: UvrABC system protein C (626 aa).

One can recognise a GIY-YIG domain in the interval 26-105 (QEPGVYFMGD…IKQHQPHFNV (80 aa)). One can recognise a UVR domain in the interval 215 to 250 (QELHQLLTQQMEKAAADLKFEQAALIRDQINSLGKL).

Belongs to the UvrC family. As to quaternary structure, interacts with UvrB in an incision complex.

The protein localises to the cytoplasm. Its function is as follows. The UvrABC repair system catalyzes the recognition and processing of DNA lesions. UvrC both incises the 5' and 3' sides of the lesion. The N-terminal half is responsible for the 3' incision and the C-terminal half is responsible for the 5' incision. This is UvrABC system protein C from Synechocystis sp. (strain ATCC 27184 / PCC 6803 / Kazusa).